Consider the following 476-residue polypeptide: tRNA-2-methylthio-N(6)-dimethylallyladenosine synthase (476 aa).

The MTTase N-terminal domain occupies 5–122; sequence KKLYIKTWGC…LPEMINQVKG (118 aa). [4Fe-4S] cluster contacts are provided by Cys14, Cys51, Cys85, Cys159, Cys163, and Cys166. The region spanning 145–377 is the Radical SAM core domain; it reads RAEGPSAFVS…QQRINQQAMS (233 aa). Positions 380-443 constitute a TRAM domain; the sequence is RAMLGSVQRI…ANSLRGKVIR (64 aa).

This sequence belongs to the methylthiotransferase family. MiaB subfamily. In terms of assembly, monomer. It depends on [4Fe-4S] cluster as a cofactor.

Its subcellular location is the cytoplasm. It catalyses the reaction N(6)-dimethylallyladenosine(37) in tRNA + (sulfur carrier)-SH + AH2 + 2 S-adenosyl-L-methionine = 2-methylsulfanyl-N(6)-dimethylallyladenosine(37) in tRNA + (sulfur carrier)-H + 5'-deoxyadenosine + L-methionine + A + S-adenosyl-L-homocysteine + 2 H(+). Functionally, catalyzes the methylthiolation of N6-(dimethylallyl)adenosine (i(6)A), leading to the formation of 2-methylthio-N6-(dimethylallyl)adenosine (ms(2)i(6)A) at position 37 in tRNAs that read codons beginning with uridine. This is tRNA-2-methylthio-N(6)-dimethylallyladenosine synthase from Photorhabdus laumondii subsp. laumondii (strain DSM 15139 / CIP 105565 / TT01) (Photorhabdus luminescens subsp. laumondii).